Consider the following 67-residue polypeptide: uncharacterized protein (67 aa).

The next 2 membrane-spanning stretches (helical) occupy residues 8-28 and 41-61; these read MWFA…IYLS and ISSF…VVVF.

The protein localises to the cell membrane. This is an uncharacterized protein from Bacillus subtilis (strain 168).